Reading from the N-terminus, the 319-residue chain is MITFLPIIFSILIVVIFVIGNFANGFIALVNSIEWVKRQKISFADQILIALAVSRVGLLWALLLHWYATELNLAFYSVEVRITAYNVWAVTNHFSNWLATSLSMFYLLKIANFSNLIFLRIKRRVKSVILVILLGPLLFLVCHLFVINMNEIVWTKEYEGNLTWKIKLRNAVFLSNMTLTMLANFVPLTLTLISFLLLICSLCKHLKKMQLHGKGSQDPSTKVHIKALQTVTCFLLLCAIYFLSMIISVYNFGRLEKKPVFMFCQAITFSYPSTHAFILIWGNKKLKQIFLSVLWHVRYWVKDRSLRLHRFTRAALCKG.

Residue Met-1 is a topological domain, extracellular. Residues 2 to 22 traverse the membrane as a helical segment; sequence ITFLPIIFSILIVVIFVIGNF. Residues 23-46 lie on the Cytoplasmic side of the membrane; the sequence is ANGFIALVNSIEWVKRQKISFADQ. A helical membrane pass occupies residues 47 to 67; sequence ILIALAVSRVGLLWALLLHWY. Residues 68-86 lie on the Extracellular side of the membrane; it reads ATELNLAFYSVEVRITAYN. Residues 87–107 traverse the membrane as a helical segment; sequence VWAVTNHFSNWLATSLSMFYL. Residues 108-126 lie on the Cytoplasmic side of the membrane; sequence LKIANFSNLIFLRIKRRVK. Residues 127-147 form a helical membrane-spanning segment; sequence SVILVILLGPLLFLVCHLFVI. Residues 148–178 are Extracellular-facing; sequence NMNEIVWTKEYEGNLTWKIKLRNAVFLSNMT. N-linked (GlcNAc...) asparagine glycans are attached at residues Asn-161 and Asn-176. A helical membrane pass occupies residues 179–199; that stretch reads LTMLANFVPLTLTLISFLLLI. Residues 200–229 are Cytoplasmic-facing; sequence CSLCKHLKKMQLHGKGSQDPSTKVHIKALQ. A helical membrane pass occupies residues 230 to 250; the sequence is TVTCFLLLCAIYFLSMIISVY. Over 251–259 the chain is Extracellular; sequence NFGRLEKKP. The helical transmembrane segment at 260–280 threads the bilayer; that stretch reads VFMFCQAITFSYPSTHAFILI. The Cytoplasmic portion of the chain corresponds to 281–319; it reads WGNKKLKQIFLSVLWHVRYWVKDRSLRLHRFTRAALCKG.

This sequence belongs to the G-protein coupled receptor T2R family.

It localises to the membrane. Its function is as follows. Receptor that may play a role in the perception of bitterness and is gustducin-linked. May play a role in sensing the chemical composition of the gastrointestinal content. The activity of this receptor may stimulate alpha gustducin, mediate PLC-beta-2 activation and lead to the gating of TRPM5. The sequence is that of Taste receptor type 2 member 30 (TAS2R30) from Pongo pygmaeus (Bornean orangutan).